The primary structure comprises 834 residues: Probable glucan 1,3-beta-glucosidase D (834 aa).

Basic and acidic residues predominate over residues 1–33 (MPSHSRSRDRYGGRDSDREARYDYDYARRRYAT). 2 disordered regions span residues 1-188 (MPSH…ASHL) and 200-251 (QYEK…TKAR). Residues 1 to 306 (MPSHSRSRDR…GGRPFWKRKK (306 aa)) are Cytoplasmic-facing. The segment covering 34–45 (DDNDDDYDDDEL) has biased composition (acidic residues). Composition is skewed to basic and acidic residues over residues 46–76 (EHGL…RDAE), 98–173 (YGHD…ETAA), 201–218 (YEKE…AAKA), and 228–245 (VVGE…ESHR). A helical; Signal-anchor for type II membrane protein transmembrane segment spans residues 307-327 (WIGLGALILILVIVIPVAVVV). Residues 328 to 834 (SKKHDNKSDP…PDFGNLPEYY (507 aa)) are Extracellular-facing. The disordered stretch occupies residues 331-354 (HDNKSDPADPQGTSPGKSNLDGLS). N-linked (GlcNAc...) asparagine glycosylation is found at Asn-333, Asn-379, Asn-384, Asn-396, Asn-549, Asn-561, and Asn-570. Glu-600 acts as the Proton donor in catalysis. N-linked (GlcNAc...) asparagine glycans are attached at residues Asn-639, Asn-672, and Asn-692. The active-site Nucleophile is Glu-705.

The protein belongs to the glycosyl hydrolase 5 (cellulase A) family.

Its subcellular location is the cell membrane. The enzyme catalyses Successive hydrolysis of beta-D-glucose units from the non-reducing ends of (1-&gt;3)-beta-D-glucans, releasing alpha-glucose.. Functionally, glucosidase involved in the degradation of cellulosic biomass. Active on lichenan. In Neosartorya fischeri (strain ATCC 1020 / DSM 3700 / CBS 544.65 / FGSC A1164 / JCM 1740 / NRRL 181 / WB 181) (Aspergillus fischerianus), this protein is Probable glucan 1,3-beta-glucosidase D (exgD).